Here is a 159-residue protein sequence, read N- to C-terminus: Protein US8.5 (159 aa).

A disordered region spans residues 27–107 (SSQPLDPEGP…APSPHPRPPG (81 aa)). Positions 80–91 (SDERGPPRHDRP) are enriched in basic and acidic residues.

This sequence belongs to the HHV-1 US8.5 protein family. Post-translationally, phosphorylated.

Its subcellular location is the host nucleus. It localises to the host nucleolus. This is Protein US8.5 from Human herpesvirus 1 (strain 17) (HHV-1).